We begin with the raw amino-acid sequence, 911 residues long: Nitrate reductase [NADH], clone PBNBR1405 (911 aa).

Residues 1-68 (MATSVDNRHY…RFDSSDDEDE (68 aa)) are disordered. Residues 49 to 62 (KSVDKTTKEDRFDS) show a composition bias toward basic and acidic residues. A Mo-molybdopterin-binding site is contributed by Cys-191. Residues 539–614 (SKMYSMSEVR…LEDYRIGELI (76 aa)) enclose the Cytochrome b5 heme-binding domain. Heme-binding residues include His-574 and His-597. The FAD-binding FR-type domain occupies 654–766 (REKVPVKLIE…KGPLGHIEYQ (113 aa)). Residues 706–709 (RAYT), 723–727 (VIKVY), Phe-728, Phe-735, 740–742 (LMS), and Thr-793 contribute to the FAD site.

This sequence belongs to the nitrate reductase family. Homodimer. Requires FAD as cofactor. The cofactor is heme. It depends on Mo-molybdopterin as a cofactor.

It carries out the reaction nitrite + NAD(+) + H2O = nitrate + NADH + H(+). In terms of biological role, nitrate reductase is a key enzyme involved in the first step of nitrate assimilation in plants, fungi and bacteria. The polypeptide is Nitrate reductase [NADH], clone PBNBR1405 (NIA1) (Brassica napus (Rape)).